Here is a 1173-residue protein sequence, read N- to C-terminus: Inner capsid protein VP3 (1173 aa).

The segment at 1 to 53 (MSNLPKPASHFEPEKNVDDKGNVTGSAPPVSKDTPTQQASVSLPNQEEPTQQT) is disordered. A compositionally biased stretch (basic and acidic residues) spans 9–21 (SHFEPEKNVDDKG). The span at 33–53 (DTPTQQASVSLPNQEEPTQQT) shows a compositional bias: polar residues.

The protein belongs to the turreted BTV-fold inner capsid family. Homodecamer; each decamer is made up of two conformers of VP2, called VP2A and VP2B. 12 homodecamers assemble to form an icosahedral capsid.

Its subcellular location is the virion. Inner capsid protein that self-assembles to form an icosahedral capsid with a T=2 symmetry, which consists of 120 copies of VP2, with channels at each of its five-fold vertices. This capsid constitutes the innermost concentric layer of the viral mature particle. The polypeptide is Inner capsid protein VP3 (Rice ragged stunt virus (isolate Thailand) (RRSV)).